We begin with the raw amino-acid sequence, 113 residues long: uncharacterized protein (113 aa).

The protein to M.jannaschii MJ0886 C-terminal region.

This is an uncharacterized protein from Clostridium pasteurianum.